A 320-amino-acid polypeptide reads, in one-letter code: tRNA U34 carboxymethyltransferase (320 aa).

Residues lysine 87, tryptophan 101, lysine 106, glycine 126, 148–150 (EPS), 176–177 (VE), methionine 192, tyrosine 196, and arginine 311 contribute to the carboxy-S-adenosyl-L-methionine site.

Belongs to the class I-like SAM-binding methyltransferase superfamily. CmoB family. As to quaternary structure, homotetramer.

The enzyme catalyses carboxy-S-adenosyl-L-methionine + 5-hydroxyuridine(34) in tRNA = 5-carboxymethoxyuridine(34) in tRNA + S-adenosyl-L-homocysteine + H(+). Its function is as follows. Catalyzes carboxymethyl transfer from carboxy-S-adenosyl-L-methionine (Cx-SAM) to 5-hydroxyuridine (ho5U) to form 5-carboxymethoxyuridine (cmo5U) at position 34 in tRNAs. The chain is tRNA U34 carboxymethyltransferase from Desulfotalea psychrophila (strain LSv54 / DSM 12343).